A 166-amino-acid polypeptide reads, in one-letter code: Thiamine precursor transporter HmpT (166 aa).

The next 5 helical transmembrane spans lie at 14 to 34 (LLAI…FPIP), 35 to 55 (GSAG…VFLF), 62 to 82 (IIGG…NYMF), 105 to 125 (FLLS…LMYG), and 126 to 146 (WGSA…GFVL).

In terms of assembly, in E.coli forms a stable energy-coupling factor (ECF) transporter complex composed of 2 membrane-embedded substrate-binding protein (S component), 2 ATP-binding proteins (A and A' components) and 2 transmembrane proteins (T component), probably with a stoichiometry of 2:1:1:2. May be able to interact with more than 1 S component at a time.

It localises to the cell membrane. Its function is as follows. Probably a thiamine precursor-binding protein that interacts with the energy-coupling factor (ECF) ABC-transporter complex. Unlike classic ABC transporters this ECF transporter provides the energy necessary to transport a number of different substrates. The substrates themselves are bound by transmembrane, not extracytoplasmic soluble proteins. This chain is Thiamine precursor transporter HmpT (hmpT), found in Lactococcus lactis subsp. cremoris (strain MG1363).